Reading from the N-terminus, the 299-residue chain is MTMPTLSALQHRLAQLAEQKNEPLTLAIIEQLKQQSYQGALSAPLVQQFCQQFSLSKIELGLGCVPIAACYALTPVSHFCVGAVAIGLSGSFYFGANQEFAGIAMQQTVHAEQSAISHAWLAGEGAISDMVVNCTPCGHCRQFMNELNTATTLQIHLPHRQHNTLQQYLIDAFGPKDLNIANVLFDQQHIVLPLQGDALVQATIKEAQQAYAPYSQAVSAVALQVGEQIICGRYAENAAFNPSLLPLQSALNYRRFLGLSDVAVSRVVMVEKRAVLSHYHMSKALAETALGLTLEYIAV.

CMP/dCMP-type deaminase domains are found at residues 56–176 and 194–299; these read SKIE…FGPK and LQGD…YIAV. Residue 97-99 coordinates substrate; the sequence is NQE. Position 110 (H110) interacts with Zn(2+). The active-site Proton donor is the E112. Zn(2+) contacts are provided by C137 and C140.

Belongs to the cytidine and deoxycytidylate deaminase family. In terms of assembly, homodimer. Zn(2+) serves as cofactor.

The catalysed reaction is cytidine + H2O + H(+) = uridine + NH4(+). It catalyses the reaction 2'-deoxycytidine + H2O + H(+) = 2'-deoxyuridine + NH4(+). Its function is as follows. This enzyme scavenges exogenous and endogenous cytidine and 2'-deoxycytidine for UMP synthesis. This Haemophilus ducreyi (strain 35000HP / ATCC 700724) protein is Cytidine deaminase.